A 508-amino-acid chain; its full sequence is Photosystem II CP47 reaction center protein (508 aa).

Transmembrane regions (helical) follow at residues 21–36, 101–115, 140–156, 203–218, 237–252, and 457–472; these read SVHIMHTALVSGWAGS, IMFSGLCFLAAIWHW, GIHLFLSGLACFGFGAF, IAAGTLGILAGLFHLS, VLSSSIAAVFFAAFVV, and SFALLFFFGHIWHGAR.

It belongs to the PsbB/PsbC family. PsbB subfamily. In terms of assembly, PSII is composed of 1 copy each of membrane proteins PsbA, PsbB, PsbC, PsbD, PsbE, PsbF, PsbH, PsbI, PsbJ, PsbK, PsbL, PsbM, PsbT, PsbX, PsbY, PsbZ, Psb30/Ycf12, at least 3 peripheral proteins of the oxygen-evolving complex and a large number of cofactors. It forms dimeric complexes. Requires Binds multiple chlorophylls. PSII binds additional chlorophylls, carotenoids and specific lipids. as cofactor.

The protein resides in the plastid. It localises to the chloroplast thylakoid membrane. Its function is as follows. One of the components of the core complex of photosystem II (PSII). It binds chlorophyll and helps catalyze the primary light-induced photochemical processes of PSII. PSII is a light-driven water:plastoquinone oxidoreductase, using light energy to abstract electrons from H(2)O, generating O(2) and a proton gradient subsequently used for ATP formation. The chain is Photosystem II CP47 reaction center protein from Ceratophyllum demersum (Rigid hornwort).